A 189-amino-acid polypeptide reads, in one-letter code: T-cell surface glycoprotein CD3 epsilon chain (189 aa).

An N-terminal signal peptide occupies residues 1–21 (MRWNTFWGILCLSLLAVGTCQ). Positions 23-99 (DAENIEYKVS…KNTYLYLKAR (77 aa)) constitute an Ig-like domain. The Extracellular portion of the chain corresponds to 23 to 108 (DAENIEYKVS…RVCEYCVEVD (86 aa)). C42 and C83 are disulfide-bonded. Residues 109-134 (LTAVAIIIIVDICITLGLLMVIYYWS) traverse the membrane as a helical segment. The Cytoplasmic portion of the chain corresponds to 135-189 (KNRKAKAKPVTRGTGAGSRPRGQNKERPPPVPNPDYEPIRKGQRDLYSGLNQRAV). A disordered region spans residues 143–189 (PVTRGTGAGSRPRGQNKERPPPVPNPDYEPIRKGQRDLYSGLNQRAV). Positions 157-174 (QNKERPPPVPNPDYEPIR) are NUMB-binding region. The 28-residue stretch at 160–187 (ERPPPVPNPDYEPIRKGQRDLYSGLNQR) folds into the ITAM domain. A proline-rich sequence region spans residues 161–168 (RPPPVPNP). Phosphotyrosine occurs at positions 170 and 181.

As to quaternary structure, the TCR-CD3 complex is composed of a CD3D/CD3E and a CD3G/CD3E heterodimers that preferentially associate with TCRalpha and TCRbeta, respectively, to form TCRalpha/CD3E/CD3G and TCRbeta/CD3G/CD3E trimers. In turn, the hexamer interacts with CD3Z homodimer to form the TCR-CD3 complex. Alternatively, TCRalpha and TCRbeta can be replaced by TCRgamma and TCRdelta. Interacts with CD6. Interacts (via Proline-rich sequence) with NCK1; the interaction is ligand dependent but independent of tyrosine kinase activation. Phosphorylated on Tyr residues after T-cell receptor triggering by LCK in association with CD4/CD8.

It is found in the cell membrane. In terms of biological role, part of the TCR-CD3 complex present on T-lymphocyte cell surface that plays an essential role in adaptive immune response. When antigen presenting cells (APCs) activate T-cell receptor (TCR), TCR-mediated signals are transmitted across the cell membrane by the CD3 chains CD3D, CD3E, CD3G and CD3Z. All CD3 chains contain immunoreceptor tyrosine-based activation motifs (ITAMs) in their cytoplasmic domain. Upon TCR engagement, these motifs become phosphorylated by Src family protein tyrosine kinases LCK and FYN, resulting in the activation of downstream signaling pathways. In addition of this role of signal transduction in T-cell activation, CD3E plays an essential role in correct T-cell development. Also participates in internalization and cell surface down-regulation of TCR-CD3 complexes via endocytosis sequences present in CD3E cytosolic region. In addition to its role as a TCR coreceptor, it serves as a receptor for ITPRIPL1. Ligand recognition inhibits T-cell activation by promoting interaction with NCK1, which prevents CD3E-ZAP70 interaction and blocks the ERK-NFkB signaling cascade and calcium influx. This Mus musculus (Mouse) protein is T-cell surface glycoprotein CD3 epsilon chain (Cd3e).